Here is a 462-residue protein sequence, read N- to C-terminus: Elongation factor 1-alpha 1 (462 aa).

Glycine 2 carries the post-translational modification N,N,N-trimethylglycine. Residues 5 to 242 (KTHINIVVIG…DCILPPTRPT (238 aa)) enclose the tr-type G domain. Positions 14–21 (GHVDSGKS) are G1. GTP is bound at residue 14–21 (GHVDSGKS). The segment at 70–74 (GITID) is G2. Residues 91-94 (DAPG) are G3. GTP is bound by residues 153–156 (NKMD) and 194–196 (SGW). Residues 153-156 (NKMD) form a G4 region. Positions 194 to 196 (SGW) are G5. 2 positions are modified to 5-glutamyl glycerylphosphorylethanolamine: glutamate 301 and glutamate 374.

This sequence belongs to the TRAFAC class translation factor GTPase superfamily. Classic translation factor GTPase family. EF-Tu/EF-1A subfamily.

The protein localises to the cytoplasm. It carries out the reaction GTP + H2O = GDP + phosphate + H(+). Translation elongation factor that catalyzes the GTP-dependent binding of aminoacyl-tRNA (aa-tRNA) to the A-site of ribosomes during the elongation phase of protein synthesis. Base pairing between the mRNA codon and the aa-tRNA anticodon promotes GTP hydrolysis, releasing the aa-tRNA from EEF1A1 and allowing its accommodation into the ribosome. The growing protein chain is subsequently transferred from the P-site peptidyl tRNA to the A-site aa-tRNA, extending it by one amino acid through ribosome-catalyzed peptide bond formation. This is Elongation factor 1-alpha 1 (EEF1A) from Gallus gallus (Chicken).